Here is a 303-residue protein sequence, read N- to C-terminus: Flavin-dependent thymidylate synthase (303 aa).

The tract at residues 1 to 21 (MALTSEQRAEIEAQRSEPQLT) is disordered. The 214-residue stretch at 43–256 (GFLRVVDYMG…PATAAAFEEY (214 aa)) folds into the ThyX domain. Residues Thr-89, 112-114 (RHR), and Glu-120 each bind FAD. DUMP contacts are provided by residues 109–112 (QWIR), 120–124 (EYSAR), and Arg-195. The short motif at 112–122 (RHRMASVNEYS) is the ThyX motif element. FAD-binding positions include 211–213 (DLH) and His-217. Arg-222 provides a ligand contact to dUMP. The active-site Involved in ionization of N3 of dUMP, leading to its activation is the Arg-222.

Belongs to the thymidylate synthase ThyX family. In terms of assembly, homotetramer. FAD serves as cofactor.

It carries out the reaction dUMP + (6R)-5,10-methylene-5,6,7,8-tetrahydrofolate + NADPH + H(+) = dTMP + (6S)-5,6,7,8-tetrahydrofolate + NADP(+). The protein operates within pyrimidine metabolism; dTTP biosynthesis. In terms of biological role, catalyzes the reductive methylation of 2'-deoxyuridine-5'-monophosphate (dUMP) to 2'-deoxythymidine-5'-monophosphate (dTMP) while utilizing 5,10-methylenetetrahydrofolate (mTHF) as the methyl donor, and NADPH and FADH(2) as the reductant. This Gluconobacter oxydans (strain 621H) (Gluconobacter suboxydans) protein is Flavin-dependent thymidylate synthase.